Here is a 410-residue protein sequence, read N- to C-terminus: Replication factor C large subunit (410 aa).

An ATP-binding site is contributed by G46–T53.

This sequence belongs to the activator 1 small subunits family. RfcL subfamily. In terms of assembly, heteromultimer composed of small subunits (RfcS) and large subunits (RfcL).

Its function is as follows. Part of the RFC clamp loader complex which loads the PCNA sliding clamp onto DNA. The sequence is that of Replication factor C large subunit from Picrophilus torridus (strain ATCC 700027 / DSM 9790 / JCM 10055 / NBRC 100828 / KAW 2/3).